Here is a 489-residue protein sequence, read N- to C-terminus: MTNSIQFIDGCWEAGEGQLFKSIDPARNEVIWSGEAASETQVEKAILAARAAFPDWSGRSVEERLAICQKFSELLEENKEHLARTMAKETGKPVWETRTEVGAMMGKVAISERAYHERTGTVENDMPGAKAFIRHKPHGVVAVYGPYNFPGHLPNGHIVPALIAGNTVVFKPSELTPMVAQETVKLWEKAGIPAGVLNLVQGEVDTGKALSAHPQIDGLYFTGSSNTGHLLHKQFGGRPDKILALEMGGNNPLLVTNVADVDAAVHNIVQSAFITSGQRCTCARRLFIEDSEQGRAVLERLIEVTENILVDDYEADPQPFMGAMISAKAAGEMVDAQNELLHKGAKSLVRMKQTDSKKGFVTPGIVDVTGVEDLPDEEHFGPLLKVYRFKDIDAAIKEANNTRYGLSAGVLCDDEQTYRYFFKHIRAGIVNWNKPITGASSAAPFGGIGASGNHRASAYYAADYCAYPVASVEADSMSLPESLAPGLKF.

223-228 is a binding site for NAD(+); it reads GSSNTG. Active-site residues include E246 and C280.

It belongs to the aldehyde dehydrogenase family. AstD subfamily.

It catalyses the reaction N-succinyl-L-glutamate 5-semialdehyde + NAD(+) + H2O = N-succinyl-L-glutamate + NADH + 2 H(+). It functions in the pathway amino-acid degradation; L-arginine degradation via AST pathway; L-glutamate and succinate from L-arginine: step 4/5. Its function is as follows. Catalyzes the NAD-dependent reduction of succinylglutamate semialdehyde into succinylglutamate. In Idiomarina loihiensis (strain ATCC BAA-735 / DSM 15497 / L2-TR), this protein is N-succinylglutamate 5-semialdehyde dehydrogenase.